The primary structure comprises 244 residues: Homeobox-leucine zipper protein HOX14 (244 aa).

The interval 25-64 is disordered; sequence ASGEVQGERPRARRRRRRGARCVGGGGGGGEVDGGDPKKR. Residues 35-44 are compositionally biased toward basic residues; sequence RARRRRRRGA. A compositionally biased stretch (gly residues) spans 46–56; that stretch reads CVGGGGGGGEV. A DNA-binding region (homeobox) is located at residues 59 to 118; the sequence is GDPKKRRLSDEQVEMLELSFREERKLETGRKVHLASELGLDPKQVAVWFQNRRARHKSKL. A coiled-coil region spans residues 108–167; it reads QNRRARHKSKLLEEEFSKLKHAHDAAILHKCHLENEVLRLKERLVVAEEEVRRLRSAAGS.

Belongs to the HD-ZIP homeobox family. Class I subfamily. As to expression, expressed in roots, stems, leaf blades and panicles.

The protein localises to the nucleus. Probable transcription factor. The sequence is that of Homeobox-leucine zipper protein HOX14 (HOX14) from Oryza sativa subsp. indica (Rice).